Reading from the N-terminus, the 256-residue chain is Non-structural protein 1 (256 aa).

The protein localises to the host cytoplasm. Its subcellular location is the host perinuclear region. Plays a role in inhibition of the host innate immune system by counteracting the type I interferon signaling. The polypeptide is Non-structural protein 1 (Infectious salmon anemia virus (isolate Atlantic salmon/Norway/810/9/99) (ISAV)).